Consider the following 290-residue polypeptide: Agmatinase (290 aa).

Mn(2+) is bound by residues His-112, Asp-135, His-137, Asp-139, Asp-216, and Asp-218.

The protein belongs to the arginase family. Agmatinase subfamily. It depends on Mn(2+) as a cofactor.

The enzyme catalyses agmatine + H2O = urea + putrescine. It participates in amine and polyamine biosynthesis; putrescine biosynthesis via agmatine pathway; putrescine from agmatine: step 1/1. Its function is as follows. Catalyzes the formation of putrescine from agmatine. The chain is Agmatinase (speB) from Bacillus cereus (strain ATCC 14579 / DSM 31 / CCUG 7414 / JCM 2152 / NBRC 15305 / NCIMB 9373 / NCTC 2599 / NRRL B-3711).